Here is a 222-residue protein sequence, read N- to C-terminus: N-(5'-phosphoribosyl)anthranilate isomerase (222 aa).

It belongs to the TrpF family.

The catalysed reaction is N-(5-phospho-beta-D-ribosyl)anthranilate = 1-(2-carboxyphenylamino)-1-deoxy-D-ribulose 5-phosphate. Its pathway is amino-acid biosynthesis; L-tryptophan biosynthesis; L-tryptophan from chorismate: step 3/5. This is N-(5'-phosphoribosyl)anthranilate isomerase from Rhizobium etli (strain ATCC 51251 / DSM 11541 / JCM 21823 / NBRC 15573 / CFN 42).